The sequence spans 407 residues: Peptidase T (407 aa).

Residue H82 coordinates Zn(2+). D84 is a catalytic residue. Position 143 (D143) interacts with Zn(2+). Residue E177 is the Proton acceptor of the active site. The Zn(2+) site is built by E178, D200, and H382.

Belongs to the peptidase M20B family. Zn(2+) serves as cofactor.

The protein resides in the cytoplasm. The enzyme catalyses Release of the N-terminal residue from a tripeptide.. Cleaves the N-terminal amino acid of tripeptides. This chain is Peptidase T, found in Streptococcus uberis (strain ATCC BAA-854 / 0140J).